Reading from the N-terminus, the 252-residue chain is MFFWCACCLMVAWRVSASDAEHCPELPPVDNSIFVAKEVEGQILGTYVCIKGYHLVGKKTLFCNASKEWDNTTTECRLGHCPDPVLVNGEFSSSGPVNVSDKITFMCNDHYILKGSNRSQCLEDHTWAPPFPICKSRDCDPPGNPVHGYFEGNNFTLGSTISYYCEDRYYLVGVQEQQCVDGEWSSALPVCKLIQEAPKPECEKALLAFQESKNLCEAMENFMQQLKESGMTMEELKYSLELKKAELKAKLL.

An N-terminal signal peptide occupies residues 1-17 (MFFWCACCLMVAWRVSA). Sushi domains are found at residues 21–78 (EHCP…ECRL), 79–136 (GHCP…ICKS), and 137–193 (RDCD…VCKL). Cystine bridges form between Cys23–Cys63, Cys49–Cys76, Cys81–Cys121, Cys107–Cys134, Cys139–Cys179, and Cys165–Cys191. Asn64, Asn71, Asn98, Asn117, and Asn154 each carry an N-linked (GlcNAc...) asparagine glycan.

As to quaternary structure, disulfide-linked complex of alpha and beta chains of 3 possible sorts: a 570 kDa complex of 7 alpha chains and 1 beta chain, a 530 kDa homoheptamer of alpha chains or a 500 kDa complex of 6 alpha chains and 1 beta chain. The central body of the alpha chain homomer supports tentacles, each with the binding site for C4b at the end.

The protein localises to the secreted. Its function is as follows. Controls the classical pathway of complement activation. It binds as a cofactor to C3b/C4b inactivator (C3bINA), which then hydrolyzes the complement fragment C4b. It also accelerates the degradation of the C4bC2a complex (C3 convertase) by dissociating the complement fragment C2a. It also interacts with anticoagulant protein S and with serum amyloid P component. The beta chain binds protein S. The chain is C4b-binding protein beta chain (C4BPB) from Homo sapiens (Human).